Here is a 249-residue protein sequence, read N- to C-terminus: Probable transcriptional regulatory protein ACIAD2052 (249 aa).

This sequence belongs to the TACO1 family.

It localises to the cytoplasm. The chain is Probable transcriptional regulatory protein ACIAD2052 from Acinetobacter baylyi (strain ATCC 33305 / BD413 / ADP1).